The following is a 527-amino-acid chain: EGF domain-specific O-linked N-acetylglucosamine transferase (527 aa).

The first 17 residues, 1 to 17 (MLKLLVLGVLLHDVSLS), serve as a signal peptide directing secretion. The Required for optimal activity motif lies at 295-297 (DYD). An N-linked (GlcNAc...) asparagine glycan is attached at Asn354. A Prevents secretion from ER motif is present at residues 524–527 (RDEL).

Belongs to the glycosyltransferase 61 family.

The protein localises to the endoplasmic reticulum lumen. The enzyme catalyses L-seryl-[protein] + UDP-N-acetyl-alpha-D-glucosamine = 3-O-(N-acetyl-beta-D-glucosaminyl)-L-seryl-[protein] + UDP + H(+). The catalysed reaction is L-threonyl-[protein] + UDP-N-acetyl-alpha-D-glucosamine = 3-O-(N-acetyl-beta-D-glucosaminyl)-L-threonyl-[protein] + UDP + H(+). Its function is as follows. Catalyzes the transfer of a single N-acetylglucosamine from UDP-GlcNAc to a serine or threonine residue in extracellular proteins resulting in their modification with a beta-linked N-acetylglucosamine (O-GlcNAc). Specifically glycosylates the Thr residue located between the fifth and sixth conserved cysteines of folded EGF-like domains. In Canis lupus familiaris (Dog), this protein is EGF domain-specific O-linked N-acetylglucosamine transferase (EOGT).